The primary structure comprises 506 residues: Ribose import ATP-binding protein RbsA 2 (506 aa).

ABC transporter domains follow at residues 6 to 241 and 254 to 499; these read LSMT…VGRV and EKSN…SITI. 38–45 is an ATP binding site; that stretch reads GENGAGKS.

The protein belongs to the ABC transporter superfamily. Ribose importer (TC 3.A.1.2.1) family. The complex is composed of an ATP-binding protein (RbsA), two transmembrane proteins (RbsC) and a solute-binding protein (RbsB).

It localises to the cell inner membrane. The catalysed reaction is D-ribose(out) + ATP + H2O = D-ribose(in) + ADP + phosphate + H(+). Part of the ABC transporter complex RbsABC involved in ribose import. Responsible for energy coupling to the transport system. The protein is Ribose import ATP-binding protein RbsA 2 of Agrobacterium fabrum (strain C58 / ATCC 33970) (Agrobacterium tumefaciens (strain C58)).